Here is a 1136-residue protein sequence, read N- to C-terminus: Probable RNA-dependent RNA polymerase 2 (1136 aa).

The disordered stretch occupies residues 965 to 989; that stretch reads SGDSGALSSSSAQPSPTYDPDLEVP. The span at 967–980 shows a compositional bias: low complexity; the sequence is DSGALSSSSAQPSP.

Belongs to the RdRP family.

It catalyses the reaction RNA(n) + a ribonucleoside 5'-triphosphate = RNA(n+1) + diphosphate. In terms of biological role, probably involved in the RNA silencing pathway and required for the generation of small interfering RNAs (siRNAs). This is Probable RNA-dependent RNA polymerase 2 (RDR2) from Oryza sativa subsp. japonica (Rice).